The following is a 92-amino-acid chain: Probable Fe(2+)-trafficking protein (92 aa).

This sequence belongs to the Fe(2+)-trafficking protein family.

Its function is as follows. Could be a mediator in iron transactions between iron acquisition and iron-requiring processes, such as synthesis and/or repair of Fe-S clusters in biosynthetic enzymes. This is Probable Fe(2+)-trafficking protein from Shewanella woodyi (strain ATCC 51908 / MS32).